The primary structure comprises 330 residues: Induced myeloid leukemia cell differentiation protein Mcl-1 homolog (330 aa).

The interval 85–155 (LAVPPEEMAA…PPEEEDDELY (71 aa)) is PEST-like. At Ser-101 the chain carries Phosphoserine. Lys-116 is covalently cross-linked (Glycyl lysine isopeptide (Lys-Gly) (interchain with G-Cter in ubiquitin)). The tract at residues 129 to 153 (EAAKSSGADGSLPSTPPPPEEEDDE) is disordered. Position 139 is a phosphoserine; by GSK3-alpha and GSK3-beta (Ser-139). Phosphoserine is present on Ser-142. Position 143 is a phosphothreonine; by MAPK (Thr-143). Glycyl lysine isopeptide (Lys-Gly) (interchain with G-Cter in ubiquitin) cross-links involve residues Lys-174 and Lys-177. The BH3 motif lies at 189–203 (ALETLRRVGDGVQRN). Positions 232 to 252 (HVFKDGVTNWGRIVTLISFGA) match the BH1 motif. Positions 284–299 (DWLVKQRGWDGFVEFF) match the BH2 motif. A helical membrane pass occupies residues 307-329 (GIRNVLLAFAGVAGVGAGLAYLI).

This sequence belongs to the Bcl-2 family. Interacts with HIF3A (via C-terminus domain). Interacts with BOK, BIK, BAX, BAK1, and TPT1. Interacts with unphosphorylated BAD. Interacts with BMF, BBC3 and PMAIP1. Interacts with BOP. Interacts with BCL2L11; may sequester BCL2L11 to prevent its pro-apoptotic activity. Interacts with GIMAP5 and HSPA8/HSC70; the interaction between HSPA8 and MCL1 is impaired in the absence of GIMAP5. In terms of processing, cleaved by CASP3 during apoptosis, yielding a pro-apoptotic C-terminal fragment. Post-translationally, rapidly degraded in the absence of phosphorylation in the PEST region. Phosphorylated on Ser-139, by GSK3, in response to IL3/interleukin-3 withdrawal. Phosphorylation at Ser-139 induces ubiquitination and proteasomal degradation, abrogating the anti-apoptotic activity. Treatment with taxol or okadaic acid induces phosphorylation on additional sites. In terms of processing, ubiquitinated. Ubiquitination is induced by phosphorylation at Ser-139. Deubiquitinated by USP20; leading to increased stability. As to expression, ubiquitous. Highly expressed in heart, spleen, lung, liver, skeletal muscle and kidney. Detected at lower levels in brain, ovary, oviduct and testis.

It localises to the membrane. It is found in the cytoplasm. The protein localises to the mitochondrion. The protein resides in the nucleus. Its subcellular location is the nucleoplasm. In terms of biological role, involved in the regulation of apoptosis versus cell survival, and in the maintenance of viability but not of proliferation. Mediates its effects by interactions with a number of other regulators of apoptosis. This Rattus norvegicus (Rat) protein is Induced myeloid leukemia cell differentiation protein Mcl-1 homolog (Mcl1).